A 523-amino-acid polypeptide reads, in one-letter code: Sporulation protein 23 (523 aa).

In terms of assembly, interacts with SPO1 in meiosis.

Its function is as follows. Regulates expression of PIS1. In Saccharomyces cerevisiae (strain ATCC 204508 / S288c) (Baker's yeast), this protein is Sporulation protein 23 (SPO23).